A 278-amino-acid polypeptide reads, in one-letter code: Thioredoxin-related transmembrane protein 1 (278 aa).

Positions 1-26 (MAHLGRLMVPLAALVLLLWAVPGAHG) are cleaved as a signal peptide. The 106-residue stretch at 27–132 (RRNNVRVLTD…FINFVSDKEW (106 aa)) folds into the Thioredoxin domain. Over 27-181 (RRNNVRVLTD…DLGIPAWGSY (155 aa)) the chain is Extracellular. Residues C56 and C59 each act as nucleophile in the active site. A disulfide bond links C56 and C59. A helical membrane pass occupies residues 182-202 (LVFAFATVLSGLLLGLCMIFV). Topologically, residues 203 to 278 (ADCLCPSKRR…VGLPSATDTS (76 aa)) are cytoplasmic. Residues C205 and C207 are each lipidated (S-palmitoyl cysteine). Residues 217 to 226 (QYAKKTSPEF) show a composition bias toward polar residues. The segment at 217–278 (QYAKKTSPEF…VGLPSATDTS (62 aa)) is disordered. The span at 235–251 (EEQEADEEDVSEEEAED) shows a compositional bias: acidic residues. Residues S245 and S278 each carry the phosphoserine modification.

In terms of assembly, interacts with ATP2A2. In terms of processing, palmitoylated; palmitoylation is required for localization to mitochondria-associated endoplasmic reticulum membrane (MAM).

It is found in the endoplasmic reticulum membrane. The protein localises to the mitochondrion membrane. It localises to the secreted. It catalyses the reaction Catalyzes the rearrangement of -S-S- bonds in proteins.. In terms of biological role, thiredoxin domain-containing protein that participates in various redox reactions through the reversible oxidation of its active center dithiol to a disulfide and catalyze dithiol-disulfide exchange reactions. Acts as a key inhibitor of the alternative triglyceride biosynthesis pathway by inhibiting the activity of TMEM68/DIESL at the endoplasmic reticulum, thereby restricting accumulation of triacylglycerol. The alternative triglyceride biosynthesis pathway mediates formation of triacylglycerol from diacylglycerol and membrane phospholipids. Acts as a protein disulfide isomerase by catalyzing formation or reduction of disulfide bonds. Specifically mediates formation of disulfide bonds of transmembrane proteins at the endoplasmic reticulum membrane. Involved in ER-associated degradation (ERAD) via its protein disulfide isomerase activity by acting on folding-defective polypeptides at the endoplasmic reticulum membrane. Acts as a negative regulator of platelet aggregation following secretion in the extracellular space. Acts as a regulator of endoplasmic reticulum-mitochondria contact sites via its ability to regulate redox signals. Regulates endoplasmic reticulum-mitochondria Ca(2+) flux. In Mus musculus (Mouse), this protein is Thioredoxin-related transmembrane protein 1.